We begin with the raw amino-acid sequence, 545 residues long: Chaperonin GroEL 2 (545 aa).

ATP contacts are provided by residues 29-32 (TLGP), 86-90 (DGTTT), Gly413, 477-479 (DAA), and Asp493. The disordered stretch occupies residues 526 to 545 (PEPAAAGHGHGHGHQHGPGF). Basic residues predominate over residues 534 to 545 (GHGHGHQHGPGF).

It belongs to the chaperonin (HSP60) family. Forms a cylinder of 14 subunits composed of two heptameric rings stacked back-to-back. Interacts with the co-chaperonin GroES.

The protein localises to the cytoplasm. It catalyses the reaction ATP + H2O + a folded polypeptide = ADP + phosphate + an unfolded polypeptide.. Together with its co-chaperonin GroES, plays an essential role in assisting protein folding. The GroEL-GroES system forms a nano-cage that allows encapsulation of the non-native substrate proteins and provides a physical environment optimized to promote and accelerate protein folding. This Salinispora arenicola (strain CNS-205) protein is Chaperonin GroEL 2.